Consider the following 385-residue polypeptide: Carbamoyl phosphate synthase small chain (385 aa).

The tract at residues 1–185 (MSEPAILVLA…LGKGFIEQTQ (185 aa)) is CPSase. L-glutamine is bound by residues serine 47, glycine 237, and glycine 239. Residues 189-376 (NVVAYDFGVK…INEMRKANLS (188 aa)) form the Glutamine amidotransferase type-1 domain. Catalysis depends on cysteine 265, which acts as the Nucleophile. Positions 266, 269, 307, 309, and 310 each coordinate L-glutamine. Catalysis depends on residues histidine 349 and glutamate 351.

Belongs to the CarA family. In terms of assembly, composed of two chains; the small (or glutamine) chain promotes the hydrolysis of glutamine to ammonia, which is used by the large (or ammonia) chain to synthesize carbamoyl phosphate. Tetramer of heterodimers (alpha,beta)4.

It carries out the reaction hydrogencarbonate + L-glutamine + 2 ATP + H2O = carbamoyl phosphate + L-glutamate + 2 ADP + phosphate + 2 H(+). The catalysed reaction is L-glutamine + H2O = L-glutamate + NH4(+). The protein operates within amino-acid biosynthesis; L-arginine biosynthesis; carbamoyl phosphate from bicarbonate: step 1/1. It participates in pyrimidine metabolism; UMP biosynthesis via de novo pathway; (S)-dihydroorotate from bicarbonate: step 1/3. Its function is as follows. Small subunit of the glutamine-dependent carbamoyl phosphate synthetase (CPSase). CPSase catalyzes the formation of carbamoyl phosphate from the ammonia moiety of glutamine, carbonate, and phosphate donated by ATP, constituting the first step of 2 biosynthetic pathways, one leading to arginine and/or urea and the other to pyrimidine nucleotides. The small subunit (glutamine amidotransferase) binds and cleaves glutamine to supply the large subunit with the substrate ammonia. The protein is Carbamoyl phosphate synthase small chain of Pasteurella multocida (strain Pm70).